The chain runs to 557 residues: NADP-dependent malic enzyme (557 aa).

The active-site Proton donor is tyrosine 91. Residue arginine 144 coordinates NADP(+). The Proton acceptor role is filled by lysine 162. The a divalent metal cation site is built by glutamate 234, aspartate 235, and aspartate 258. NADP(+)-binding positions include aspartate 258, 290–307, and asparagine 397; that span reads GAGE…MAME.

It belongs to the malic enzymes family. Homotetramer. Requires Mg(2+) as cofactor. The cofactor is Mn(2+).

It is found in the cytoplasm. The enzyme catalyses (S)-malate + NADP(+) = pyruvate + CO2 + NADPH. It carries out the reaction oxaloacetate + H(+) = pyruvate + CO2. The polypeptide is NADP-dependent malic enzyme (ME1) (Anas platyrhynchos (Mallard)).